We begin with the raw amino-acid sequence, 412 residues long: Adenylosuccinate synthetase (412 aa).

Residues 12-18 (GDEGKGK) and 40-42 (GHE) contribute to the GTP site. Asp-13 (proton acceptor) is an active-site residue. The Mg(2+) site is built by Asp-13 and Gly-40. Residues 13 to 16 (DEGK), 38 to 41 (NAGH), Arg-134, Asn-212, Thr-227, and Arg-291 each bind IMP. The active-site Proton donor is the His-41. A substrate-binding site is contributed by 287–293 (TSTGRRR). GTP is bound by residues Arg-293, 318-320 (KLD), and 400-402 (GTG).

Belongs to the adenylosuccinate synthetase family. Homodimer. Mg(2+) serves as cofactor.

It localises to the cytoplasm. The enzyme catalyses IMP + L-aspartate + GTP = N(6)-(1,2-dicarboxyethyl)-AMP + GDP + phosphate + 2 H(+). The protein operates within purine metabolism; AMP biosynthesis via de novo pathway; AMP from IMP: step 1/2. Its function is as follows. Plays an important role in the de novo pathway and in the salvage pathway of purine nucleotide biosynthesis. Catalyzes the first committed step in the biosynthesis of AMP from IMP. The polypeptide is Adenylosuccinate synthetase (Fusarium vanettenii (strain ATCC MYA-4622 / CBS 123669 / FGSC 9596 / NRRL 45880 / 77-13-4) (Fusarium solani subsp. pisi)).